The following is a 419-amino-acid chain: Metacaspase-1 (419 aa).

A disordered region spans residues 1-109 (MSGYPGYNNG…PPQGMHAFGQ (109 aa)). 2 stretches are compositionally biased toward pro residues: residues 18–37 (QYPPQPYYPPQPAYGAPPPQ) and 45–61 (QPPPPQQPYGYSQPPPQ). The span at 83–95 (SVNSNAYTNGNQN) shows a compositional bias: polar residues. Active-site residues include His210 and Cys266.

It belongs to the peptidase C14B family.

In terms of biological role, involved in cell death (apoptosis). This Botryotinia fuckeliana (strain B05.10) (Noble rot fungus) protein is Metacaspase-1 (casA).